We begin with the raw amino-acid sequence, 316 residues long: 4-hydroxy-3-methylbut-2-enyl diphosphate reductase (316 aa).

C12 serves as a coordination point for [4Fe-4S] cluster. 2 residues coordinate (2E)-4-hydroxy-3-methylbut-2-enyl diphosphate: H41 and H74. H41 and H74 together coordinate dimethylallyl diphosphate. Isopentenyl diphosphate-binding residues include H41 and H74. Residue C96 participates in [4Fe-4S] cluster binding. H124 is a binding site for (2E)-4-hydroxy-3-methylbut-2-enyl diphosphate. H124 is a dimethylallyl diphosphate binding site. H124 serves as a coordination point for isopentenyl diphosphate. The active-site Proton donor is the E126. T167 serves as a coordination point for (2E)-4-hydroxy-3-methylbut-2-enyl diphosphate. Position 197 (C197) interacts with [4Fe-4S] cluster. The (2E)-4-hydroxy-3-methylbut-2-enyl diphosphate site is built by S225, S226, N227, and S269. The dimethylallyl diphosphate site is built by S225, S226, N227, and S269. S225, S226, N227, and S269 together coordinate isopentenyl diphosphate.

It belongs to the IspH family. In terms of assembly, homodimer. Requires [4Fe-4S] cluster as cofactor.

The catalysed reaction is isopentenyl diphosphate + 2 oxidized [2Fe-2S]-[ferredoxin] + H2O = (2E)-4-hydroxy-3-methylbut-2-enyl diphosphate + 2 reduced [2Fe-2S]-[ferredoxin] + 2 H(+). The enzyme catalyses dimethylallyl diphosphate + 2 oxidized [2Fe-2S]-[ferredoxin] + H2O = (2E)-4-hydroxy-3-methylbut-2-enyl diphosphate + 2 reduced [2Fe-2S]-[ferredoxin] + 2 H(+). It participates in isoprenoid biosynthesis; dimethylallyl diphosphate biosynthesis; dimethylallyl diphosphate from (2E)-4-hydroxy-3-methylbutenyl diphosphate: step 1/1. The protein operates within isoprenoid biosynthesis; isopentenyl diphosphate biosynthesis via DXP pathway; isopentenyl diphosphate from 1-deoxy-D-xylulose 5-phosphate: step 6/6. In terms of biological role, catalyzes the conversion of 1-hydroxy-2-methyl-2-(E)-butenyl 4-diphosphate (HMBPP) into a mixture of isopentenyl diphosphate (IPP) and dimethylallyl diphosphate (DMAPP). Acts in the terminal step of the DOXP/MEP pathway for isoprenoid precursor biosynthesis. The polypeptide is 4-hydroxy-3-methylbut-2-enyl diphosphate reductase (Sodalis glossinidius (strain morsitans)).